The chain runs to 312 residues: Ribonuclease Z (312 aa).

Zn(2+)-binding residues include H62, H64, D66, H67, H144, D215, and H273. Catalysis depends on D66, which acts as the Proton acceptor.

Belongs to the RNase Z family. Homodimer. Requires Zn(2+) as cofactor.

The catalysed reaction is Endonucleolytic cleavage of RNA, removing extra 3' nucleotides from tRNA precursor, generating 3' termini of tRNAs. A 3'-hydroxy group is left at the tRNA terminus and a 5'-phosphoryl group is left at the trailer molecule.. Functionally, zinc phosphodiesterase, which displays some tRNA 3'-processing endonuclease activity. Probably involved in tRNA maturation, by removing a 3'-trailer from precursor tRNA. The sequence is that of Ribonuclease Z from Prochlorococcus marinus (strain MIT 9515).